The following is a 993-amino-acid chain: Replication protein 1a (993 aa).

The tract at residues 51-409 (NVLGVKDSEV…TIVINGMSMQ (359 aa)) is methyltransferase. The 219-residue stretch at 72–290 (HLTQQEFAPH…HDWENIRSFL (219 aa)) folds into the Alphavirus-like MT domain. The segment at 543 to 576 (EVSDRPEAPSPTPDDPADVCGKEQEVSELDSLSA) is disordered. The (+)RNA virus helicase ATP-binding domain occupies 684–838 (NSECVVCNNE…KIIPDETSDA (155 aa)). The segment at 712–975 (VDGVAGCGKT…LTRHKVTFRY (264 aa)) is ATP-dependent helicase. 714–721 (GVAGCGKT) is a binding site for ATP. Residues 839–993 (DTTFRSPQDV…DLIAECIARA (155 aa)) form the (+)RNA virus helicase C-terminal domain.

Belongs to the bromoviridae replication protein 1a family. As to quaternary structure, interacts with RNA-directed RNA polymerase 2a.

The protein resides in the host endoplasmic reticulum membrane. Its function is as follows. Involved in the virus replication. Contains a helicase domain and a methyltransferase domain. The methyltransferase domain is probably involved in viral RNA capping. Involved in the formation of ER membrane spherular invaginations in which RNA replication complexes form. The chain is Replication protein 1a from Cucumber mosaic virus (strain Ixora) (CMV).